The following is a 461-amino-acid chain: Nuclear distribution protein PAC1 (461 aa).

A LisH domain is found at Gln-9 to Glu-41. Residues Thr-61 to Thr-88 are a coiled coil. WD repeat units follow at residues Ser-114–Lys-155, His-157–Arg-197, Gly-201–Thr-248, Gly-251–Lys-290, Gln-312–Leu-355, Gly-357–Lys-396, Ala-401–Val-446, and Ala-448–Asn-461.

This sequence belongs to the WD repeat LIS1/nudF family. Self-associates. Interacts with NDL1 and dynein.

It is found in the cytoplasm. The protein localises to the cytoskeleton. The protein resides in the spindle pole. In terms of biological role, positively regulates the activity of the minus-end directed microtubule motor protein dynein. May enhance dynein-mediated microtubule sliding by targeting dynein to the microtubule plus end. Required for nuclear migration during vegetative growth as well as development. Required for retrograde early endosome (EE) transport from the hyphal tip. Required for localization of dynein to the mitotic spindle poles. Recruits additional proteins to the dynein complex at SPBs. This Arthroderma benhamiae (strain ATCC MYA-4681 / CBS 112371) (Trichophyton mentagrophytes) protein is Nuclear distribution protein PAC1.